Here is a 279-residue protein sequence, read N- to C-terminus: MKVISSIQELRDQLRGQNRTAFVPTMGNLHEGHLSLMRLARQHGDPVVASIFVNRLQFGPNEDFDKYPRTLQDDIEKLQQNNVYVLFAPTERDMYPEPQEYRVLPPDDLGGILEGEFRPGFFAGVCTVVTKLMSCVQPRVAVFGKKDYQQLMIVRRMCQQLALPVEIIAAETVRDEDGLALSSRNRYLTTDERKEAPELAKTLQRVRDSVLGGERDLGKLEQQAHTHLAERGWVPDYIAIRRRANLIAPSAAELEAGEPLVVLAAAKLGATRLIDNLEI.

26–33 (MGNLHEGH) serves as a coordination point for ATP. The active-site Proton donor is the His-33. Gln-57 contributes to the (R)-pantoate binding site. Gln-57 serves as a coordination point for beta-alanine. 144–147 (GKKD) contributes to the ATP binding site. Gln-150 contributes to the (R)-pantoate binding site. ATP is bound by residues Val-173 and 181–184 (LSSR).

The protein belongs to the pantothenate synthetase family. Homodimer.

It localises to the cytoplasm. The enzyme catalyses (R)-pantoate + beta-alanine + ATP = (R)-pantothenate + AMP + diphosphate + H(+). It participates in cofactor biosynthesis; (R)-pantothenate biosynthesis; (R)-pantothenate from (R)-pantoate and beta-alanine: step 1/1. Its function is as follows. Catalyzes the condensation of pantoate with beta-alanine in an ATP-dependent reaction via a pantoyl-adenylate intermediate. This is Pantothenate synthetase from Burkholderia orbicola (strain MC0-3).